Reading from the N-terminus, the 285-residue chain is Nucleotide-binding protein Psyr_4150 (285 aa).

8-15 (GRSGSGKS) provides a ligand contact to ATP. 60–63 (DARN) is a GTP binding site.

It belongs to the RapZ-like family.

Functionally, displays ATPase and GTPase activities. The chain is Nucleotide-binding protein Psyr_4150 from Pseudomonas syringae pv. syringae (strain B728a).